A 190-amino-acid polypeptide reads, in one-letter code: Potassium-transporting ATPase KdpC subunit (190 aa).

A helical transmembrane segment spans residues 10–30 (TFLFLLLITGGVYPLLTTALG).

This sequence belongs to the KdpC family. As to quaternary structure, the system is composed of three essential subunits: KdpA, KdpB and KdpC.

The protein resides in the cell inner membrane. Functionally, part of the high-affinity ATP-driven potassium transport (or Kdp) system, which catalyzes the hydrolysis of ATP coupled with the electrogenic transport of potassium into the cytoplasm. This subunit acts as a catalytic chaperone that increases the ATP-binding affinity of the ATP-hydrolyzing subunit KdpB by the formation of a transient KdpB/KdpC/ATP ternary complex. In Escherichia coli O45:K1 (strain S88 / ExPEC), this protein is Potassium-transporting ATPase KdpC subunit.